The following is a 1235-amino-acid chain: ATP-dependent helicase/nuclease subunit A (1235 aa).

In terms of domain architecture, UvrD-like helicase ATP-binding spans 12–482 (SLWTDDQWKA…IDLSQNFRSR (471 aa)). An ATP-binding site is contributed by 33 to 40 (AAAGSGKT). The UvrD-like helicase C-terminal domain occupies 509–800 (AAELTLGASF…RMMTIHASKG (292 aa)).

Belongs to the helicase family. AddA subfamily. Heterodimer of AddA and AddB/RexB. Requires Mg(2+) as cofactor.

The catalysed reaction is Couples ATP hydrolysis with the unwinding of duplex DNA by translocating in the 3'-5' direction.. It carries out the reaction ATP + H2O = ADP + phosphate + H(+). Its function is as follows. The heterodimer acts as both an ATP-dependent DNA helicase and an ATP-dependent, dual-direction single-stranded exonuclease. Recognizes the chi site generating a DNA molecule suitable for the initiation of homologous recombination. The AddA nuclease domain is required for chi fragment generation; this subunit has the helicase and 3' -&gt; 5' nuclease activities. In Listeria monocytogenes serotype 4b (strain F2365), this protein is ATP-dependent helicase/nuclease subunit A.